Here is a 128-residue protein sequence, read N- to C-terminus: Translation initiation factor 5A (128 aa).

Lys-35 bears the Hypusine mark.

Belongs to the eIF-5A family.

Its subcellular location is the cytoplasm. Its function is as follows. Functions by promoting the formation of the first peptide bond. The protein is Translation initiation factor 5A (eif5a) of Methanosarcina acetivorans (strain ATCC 35395 / DSM 2834 / JCM 12185 / C2A).